The primary structure comprises 93 residues: MASGQQERSQLDRKAREGETVVPGGTGGKSLEAQQNLAEGRSRGGQTRREQMGQEGYSEMGRKGGLSSNDESGGERAAREGIDIDESKFKTKS.

Residues 1-93 (MASGQQERSQ…IDESKFKTKS (93 aa)) are disordered. Composition is skewed to basic and acidic residues over residues 9–19 (SQLDRKAREGE) and 73–93 (GGER…KTKS).

It belongs to the small hydrophilic plant seed protein family. In terms of tissue distribution, embryos and young seedlings.

Lea proteins are late embryonic proteins abundant in higher plant seed embryos. It may have a role in desiccation tolerance by acting as an osmoprotective protein or as a desiccation-damage repair protein. In Hordeum vulgare (Barley), this protein is Late embryogenesis abundant protein B19.1A (B19.1A).